The sequence spans 241 residues: General transcription factor IIF subunit 2 (241 aa).

This sequence belongs to the TFIIF beta subunit family. Heterodimer of an alpha and a beta subunit.

It localises to the nucleus. Its function is as follows. TFIIF is a general transcription initiation factor that binds to RNA polymerase II and helps to recruit it to the initiation complex in collaboration with TFIIB. In Dictyostelium discoideum (Social amoeba), this protein is General transcription factor IIF subunit 2 (gtf2f2).